Reading from the N-terminus, the 539-residue chain is MRTLTELDKKVLRAEFPQLSFSEDADIDRYFELRSLGDQRQALDIYNRTLLVKYPQKERRVLLMSYYRKRDVRFKEVLADALAELAQKKIQEIKKIIDFFAAAVAPLDLTDVRTLIRVCEKIVRSISLNRFESVHFSRKHTHYAQWLLYREKEMEKAADIIRMYVTDTLSSVRTFRQESHTRATYGFCTEAHGTDTSSTIDFSQLVFTAEQVRTIEIAKTITKIEDRVLAYAIKYWHRYDDRAFENTVLLYSRKYKTHHYNIFHSIKTGRSHQWKDEDILHLVLAHVASGYYYSISGDLYLQRNWHWLKARLVERAEHHHQKGKKVPATHRRSSTPHARKTAGTRARTRARKKELPALPSEKISKKDSGESKQKDETAGMERVFRHNTKNVRTCSSRASRTGTHAEARHSDIVTSSPVHQEGAATVERSSPPEETVESIAHIVKRITGKDYGVYRELFFKEVRTAIRTVLNRATVRRGLRLRARKNNAEDTIYHFLHTHYDDPYQRWPNSHEYQQVHTLGFSIHSLEPIIVTWAESEGL.

Positions 316-433 (AEHHHQKGKK…ATVERSSPPE (118 aa)) are disordered. A compositionally biased stretch (basic residues) spans 318–352 (HHHQKGKKVPATHRRSSTPHARKTAGTRARTRARK). The segment covering 362–384 (KISKKDSGESKQKDETAGMERVF) has biased composition (basic and acidic residues). Over residues 390 to 402 (NVRTCSSRASRTG) the composition is skewed to polar residues.

This is an uncharacterized protein from Treponema pallidum (strain Nichols).